The chain runs to 113 residues: Large ribosomal subunit protein uL24 (113 aa).

Belongs to the universal ribosomal protein uL24 family. Part of the 50S ribosomal subunit.

Its function is as follows. One of two assembly initiator proteins, it binds directly to the 5'-end of the 23S rRNA, where it nucleates assembly of the 50S subunit. Functionally, one of the proteins that surrounds the polypeptide exit tunnel on the outside of the subunit. This chain is Large ribosomal subunit protein uL24, found in Micrococcus luteus (strain ATCC 4698 / DSM 20030 / JCM 1464 / CCM 169 / CCUG 5858 / IAM 1056 / NBRC 3333 / NCIMB 9278 / NCTC 2665 / VKM Ac-2230) (Micrococcus lysodeikticus).